Consider the following 447-residue polypeptide: Tubulin beta chain (447 aa).

GTP is bound by residues Gln11, Glu69, Ser138, Gly142, Thr143, Gly144, Asn204, and Asn226. Glu69 contacts Mg(2+). The disordered stretch occupies residues 427-447; it reads DAGIDEEEEEYEEELPLEGEE. Acidic residues predominate over residues 429–447; that stretch reads GIDEEEEEYEEELPLEGEE.

The protein belongs to the tubulin family. As to quaternary structure, dimer of alpha and beta chains. A typical microtubule is a hollow water-filled tube with an outer diameter of 25 nm and an inner diameter of 15 nM. Alpha-beta heterodimers associate head-to-tail to form protofilaments running lengthwise along the microtubule wall with the beta-tubulin subunit facing the microtubule plus end conferring a structural polarity. Microtubules usually have 13 protofilaments but different protofilament numbers can be found in some organisms and specialized cells. The cofactor is Mg(2+).

It is found in the cytoplasm. The protein localises to the cytoskeleton. In terms of biological role, tubulin is the major constituent of microtubules, a cylinder consisting of laterally associated linear protofilaments composed of alpha- and beta-tubulin heterodimers. Microtubules grow by the addition of GTP-tubulin dimers to the microtubule end, where a stabilizing cap forms. Below the cap, tubulin dimers are in GDP-bound state, owing to GTPase activity of alpha-tubulin. This is Tubulin beta chain (TUB2) from Hapsidospora chrysogena (Acremonium chrysogenum).